The following is a 215-amino-acid chain: Probable phosphoglycerate mutase GpmB (215 aa).

Residues 8–15, 21–22, Arg58, Lys60, 82–85, 104–105, and 151–152 contribute to the substrate site; these read RHGETQWN, QG, ELDM, RR, and GI. Residue His9 is the Tele-phosphohistidine intermediate of the active site. Residue Glu82 is the Proton donor/acceptor of the active site.

This sequence belongs to the phosphoglycerate mutase family. GpmB subfamily.

The enzyme catalyses (2R)-2-phosphoglycerate = (2R)-3-phosphoglycerate. Its pathway is carbohydrate degradation; glycolysis; pyruvate from D-glyceraldehyde 3-phosphate: step 3/5. This chain is Probable phosphoglycerate mutase GpmB, found in Salmonella paratyphi C (strain RKS4594).